A 669-amino-acid chain; its full sequence is Elongation factor G 2 (669 aa).

One can recognise a tr-type G domain in the interval 1 to 276 (MSIRNIGIMA…SIVDYLPSPF (276 aa)). GTP-binding positions include 10 to 17 (AHIDAGKT), 74 to 78 (DTPGH), and 128 to 131 (NKMD).

It belongs to the TRAFAC class translation factor GTPase superfamily. Classic translation factor GTPase family. EF-G/EF-2 subfamily.

Its subcellular location is the cytoplasm. Functionally, catalyzes the GTP-dependent ribosomal translocation step during translation elongation. During this step, the ribosome changes from the pre-translocational (PRE) to the post-translocational (POST) state as the newly formed A-site-bound peptidyl-tRNA and P-site-bound deacylated tRNA move to the P and E sites, respectively. Catalyzes the coordinated movement of the two tRNA molecules, the mRNA and conformational changes in the ribosome. The chain is Elongation factor G 2 (fusB) from Borreliella burgdorferi (strain ATCC 35210 / DSM 4680 / CIP 102532 / B31) (Borrelia burgdorferi).